The following is a 285-amino-acid chain: Nucleotide-binding protein Cphy_0331 (285 aa).

8–15 (GMSGAGKS) is an ATP binding site. A GTP-binding site is contributed by 59–62 (DIRS).

This sequence belongs to the RapZ-like family.

In terms of biological role, displays ATPase and GTPase activities. The polypeptide is Nucleotide-binding protein Cphy_0331 (Lachnoclostridium phytofermentans (strain ATCC 700394 / DSM 18823 / ISDg) (Clostridium phytofermentans)).